Here is a 298-residue protein sequence, read N- to C-terminus: DNA-binding transcriptional activator HetR (298 aa).

Residue S152 is part of the active site.

This sequence belongs to the peptidase S48 family. In terms of assembly, homodimer; disulfide-linked.

In terms of biological role, controls heterocyst differentiation. Dimerization is required for DNA-binding. Has both a protease and a DNA-binding activity. This is DNA-binding transcriptional activator HetR from Nostoc sp. (strain PCC 9229).